Here is a 214-residue protein sequence, read N- to C-terminus: Ras-related protein Rab-17 (214 aa).

S29 is modified (phosphoserine). 4 residues coordinate GTP: G31, K32, T33, and T50. T33, T50, and D73 together coordinate Mg(2+). A Switch 1 motif is present at residues 43–54 (DFSNVLPTVGCA). Positions 75–91 (AGQEKYQSVCHLYFRGA) match the Switch 2 motif. 5 residues coordinate GTP: G76, N132, K133, D135, and A163. Residues 183 to 204 (RAGDTGSSRPQEGEAVALNQEP) form a disordered region. Residues C211 and C212 are each lipidated (S-geranylgeranyl cysteine).

It belongs to the small GTPase superfamily. Rab family. The cofactor is Mg(2+). As to expression, expressed in kidney, liver, and intestine mainly by epithelial cells. Expressed in hippocampus (at protein level).

The protein localises to the recycling endosome membrane. It localises to the melanosome. The protein resides in the cell projection. Its subcellular location is the dendrite. The catalysed reaction is GTP + H2O = GDP + phosphate + H(+). Regulated by guanine nucleotide exchange factors (GEFs) which promote the exchange of bound GDP for free GTP. Regulated by GTPase activating proteins (GAPs) which increase the GTP hydrolysis activity. Inhibited by GDP dissociation inhibitors (GDIs). Its function is as follows. The small GTPases Rab are key regulators of intracellular membrane trafficking, from the formation of transport vesicles to their fusion with membranes. Rabs cycle between an inactive GDP-bound form and an active GTP-bound form that is able to recruit to membranes different set of downstream effectors directly responsible for vesicle formation, movement, tethering and fusion. RAB17 is involved in transcytosis, the directed movement of endocytosed material through the cell and its exocytosis from the plasma membrane at the opposite side. Mainly observed in epithelial cells, transcytosis mediates, for instance, the transcellular transport of immunoglobulins from the basolateral surface to the apical surface. Most probably controls membrane trafficking through apical recycling endosomes in a post-endocytic step of transcytosis. Required for melanosome transport and release from melanocytes, it also regulates dendrite and dendritic spine development. May also play a role in cell migration. In Mus musculus (Mouse), this protein is Ras-related protein Rab-17.